The primary structure comprises 39 residues: Cytochrome b559 subunit beta (39 aa).

Residues 14-30 (WLAVHGLAVPTVSFLGS) traverse the membrane as a helical segment. His-18 contributes to the heme binding site.

The protein belongs to the PsbE/PsbF family. As to quaternary structure, heterodimer of an alpha subunit and a beta subunit. PSII is composed of 1 copy each of membrane proteins PsbA, PsbB, PsbC, PsbD, PsbE, PsbF, PsbH, PsbI, PsbJ, PsbK, PsbL, PsbM, PsbT, PsbX, PsbY, PsbZ, Psb30/Ycf12, at least 3 peripheral proteins of the oxygen-evolving complex and a large number of cofactors. It forms dimeric complexes. Requires heme b as cofactor.

The protein localises to the plastid. It localises to the chloroplast thylakoid membrane. This b-type cytochrome is tightly associated with the reaction center of photosystem II (PSII). PSII is a light-driven water:plastoquinone oxidoreductase that uses light energy to abstract electrons from H(2)O, generating O(2) and a proton gradient subsequently used for ATP formation. It consists of a core antenna complex that captures photons, and an electron transfer chain that converts photonic excitation into a charge separation. This Muilla maritima (Sea muilla) protein is Cytochrome b559 subunit beta.